A 1266-amino-acid chain; its full sequence is TBC1 domain family member 9 (1266 aa).

GRAM domains are found at residues 146-213 (VKFH…EKNA) and 293-361 (ERYR…EKAD). Positions 415–456 (SYNSSDDEVYSRPSSLVSSSPQRSTSSDADGERQFNLNGNSV) are disordered. Low complexity predominate over residues 425–441 (SRPSSLVSSSPQRSTSS). Residues 515–702 (GIPESMRGEL…VVVDCFFYEG (188 aa)) enclose the Rab-GAP TBC domain. Residues 886 to 921 (HSDVLASRLFQLLDENGDSLINFREFVSGLSAACHG) form the EF-hand domain. 2 disordered regions span residues 1075–1095 (AKEGGSGGSGPSCHQGIPGVL) and 1132–1164 (DIKLEDSSPRDNGACSSMLISDDDTKDDSSMSS).

In terms of biological role, may act as a GTPase-activating protein for Rab family protein(s). This is TBC1 domain family member 9 (TBC1D9) from Homo sapiens (Human).